A 97-amino-acid chain; its full sequence is Co-chaperonin GroES (97 aa).

Belongs to the GroES chaperonin family. In terms of assembly, heptamer of 7 subunits arranged in a ring. Interacts with the chaperonin GroEL.

Its subcellular location is the cytoplasm. In terms of biological role, together with the chaperonin GroEL, plays an essential role in assisting protein folding. The GroEL-GroES system forms a nano-cage that allows encapsulation of the non-native substrate proteins and provides a physical environment optimized to promote and accelerate protein folding. GroES binds to the apical surface of the GroEL ring, thereby capping the opening of the GroEL channel. This is Co-chaperonin GroES from Pseudomonas aeruginosa (strain LESB58).